The primary structure comprises 136 residues: Putative pre-16S rRNA nuclease (136 aa).

This sequence belongs to the YqgF nuclease family.

The protein resides in the cytoplasm. Its function is as follows. Could be a nuclease involved in processing of the 5'-end of pre-16S rRNA. The sequence is that of Putative pre-16S rRNA nuclease from Francisella tularensis subsp. holarctica (strain FTNF002-00 / FTA).